Here is a 139-residue protein sequence, read N- to C-terminus: Protein archease (139 aa).

Ca(2+) contacts are provided by aspartate 12, aspartate 138, and isoleucine 139.

Belongs to the archease family.

Its function is as follows. Activates the tRNA-splicing ligase complex by facilitating the enzymatic turnover of catalytic subunit RtcB. Acts by promoting the guanylylation of RtcB, a key intermediate step in tRNA ligation. Can also alter the NTP specificity of RtcB such that ATP, dGTP or ITP is used efficiently. The polypeptide is Protein archease (Sulfolobus acidocaldarius (strain ATCC 33909 / DSM 639 / JCM 8929 / NBRC 15157 / NCIMB 11770)).